A 547-amino-acid chain; its full sequence is Probable high-affinity hexose transporter ght8, mitochondrial (547 aa).

Residues 1–21 (MGKTLTIVMLVFVSMAGWMFG) constitute a mitochondrion transit peptide. Topologically, residues 22–86 (ADTGSIGGIT…SPLMDRIGKR (65 aa)) are mitochondrial intermembrane. Residues 87–107 (VSIMFWTIVYLIGIILQVTAV) traverse the membrane as a helical segment. The Cytoplasmic portion of the chain corresponds to 108-112 (PSWVQ). Residues 113 to 133 (IMVAKIWTGLAIGALSVLAPG) traverse the membrane as a helical segment. Residues 134–144 (FQSEVAPATLR) are Mitochondrial intermembrane-facing. Residues 145 to 165 (GTIVTTYQLAVTGGIFIAACI) traverse the membrane as a helical segment. The Cytoplasmic segment spans residues 166-179 (NMGTHKLHKTAQWR). The helical transmembrane segment at 180–200 (VSMGINLLWGIIMFIGISFLP) threads the bilayer. The Mitochondrial intermembrane portion of the chain corresponds to 201 to 304 (ESPRYLIAIG…TGMNSPYLSA (104 aa)). A helical membrane pass occupies residues 305-325 (LILDAVNFGCTFGGLFVLEFF). Over 326 to 328 (GRR) the chain is Cytoplasmic. A helical transmembrane segment spans residues 329 to 349 (MPLIIGGVWQSITFFIYAAVG). The Mitochondrial intermembrane segment spans residues 350–363 (NRALTRKNGTSNHR). The chain crosses the membrane as a helical span at residues 364–384 (AGAVMIVFSCLFIFSFAQTWG). Residues 385–404 (PAAYVIVGESYPIRYRSKCA) lie on the Cytoplasmic side of the membrane. The chain crosses the membrane as a helical span at residues 405-425 (AVATTGNWLWGFLITFFTPFI). Residues 426-432 (SDSIGFK) lie on the Mitochondrial intermembrane side of the membrane. The helical transmembrane segment at 433-453 (YGYIFAACNLCAACIIFLFAH) threads the bilayer. Over 454–547 (ETKGLTLEEI…NYVDEQDRYA (94 aa)) the chain is Cytoplasmic. The segment at 482 to 547 (GQAAKQQQEV…NYVDEQDRYA (66 aa)) is disordered. Residues 517-529 (TSSNDITSSTSSS) are compositionally biased toward low complexity. A Phosphoserine modification is found at Ser519. Residues Thr523 and Thr526 each carry the phosphothreonine modification. Phosphoserine occurs at positions 527, 528, 529, and 537.

Belongs to the major facilitator superfamily. Sugar transporter (TC 2.A.1.1) family.

It localises to the mitochondrion membrane. The protein is Probable high-affinity hexose transporter ght8, mitochondrial (ght8) of Schizosaccharomyces pombe (strain 972 / ATCC 24843) (Fission yeast).